The chain runs to 326 residues: Transcription cofactor vestigial-like protein 3 (326 aa).

A disordered region spans residues V57 to E80. Residue K62 forms a Glycyl lysine isopeptide (Lys-Gly) (interchain with G-Cter in SUMO2) linkage. Positions E64–K75 are enriched in acidic residues. Residue K126 forms a Glycyl lysine isopeptide (Lys-Gly) (interchain with G-Cter in SUMO2) linkage. Disordered stretches follow at residues P175 to V203 and H233 to D256. A compositionally biased stretch (basic residues) spans H233–P249.

The protein belongs to the vestigial family. As to expression, enriched in placenta.

It localises to the nucleus. May act as a specific coactivator for the mammalian TEFs. The chain is Transcription cofactor vestigial-like protein 3 (VGLL3) from Homo sapiens (Human).